An 812-amino-acid polypeptide reads, in one-letter code: Chromosome alignment-maintaining phosphoprotein 1 (812 aa).

Met1 bears the N-acetylmethionine mark. Residues 86 to 105 (ASPDKWNDKPKNQLNKETDP) show a composition bias toward basic and acidic residues. Disordered stretches follow at residues 86 to 124 (ASPD…SAEP) and 136 to 546 (KLGS…PEAR). Residues Ser87, Ser108, Ser173, Ser184, Ser204, Ser214, and Ser217 each carry the phosphoserine modification. A compositionally biased stretch (pro residues) spans 202 to 213 (VPSPEPQKPAPV). The segment covering 220–233 (ATLSNPKPQKQSHF) has biased composition (polar residues). Phosphoserine occurs at positions 244, 247, 253, 264, 275, 282, 286, 297, 308, 319, 344, 355, 376, 382, and 386. The interval 271–490 (ARTTSPEPRK…KSSFFIEPQK (220 aa)) is mediates interaction with MAD2L2. The segment covering 284-297 (SESPEPWKPFPAVS) has biased composition (pro residues). Residues 336–361 (PAKPAPSVSPGPWKPIPSVSPGPWKP) are compositionally biased toward pro residues. Positions 363 to 392 (PSVSSASWKSSSVSPSSWKSPPASPESWKS) are enriched in low complexity. Residue Thr403 is modified to Phosphothreonine. 8 positions are modified to phosphoserine: Ser405, Ser416, Ser427, Ser432, Ser436, Ser443, Ser445, and Ser452. The segment at 451–590 (LSPDQRKTSP…ELQIDAIDDQ (140 aa)) is mediates localization to the spindle and the kinetochore and is required for the attachment of spindle microtubules to the kinetochore. Phosphothreonine is present on Thr458. 4 positions are modified to phosphoserine: Ser459, Ser462, Ser472, and Ser476. At Lys490 the chain carries N6-acetyllysine; alternate. A Glycyl lysine isopeptide (Lys-Gly) (interchain with G-Cter in SUMO2); alternate cross-link involves residue Lys490. Low complexity predominate over residues 499–512 (PGPSGPSESPKAAS). Residues Ser507, Ser512, and Ser542 each carry the phosphoserine modification. A Glycyl lysine isopeptide (Lys-Gly) (interchain with G-Cter in SUMO2) cross-link involves residue Lys565. A phosphoserine mark is found at Ser572 and Ser603. The segment at 591–812 (KCDILVQEEL…LEPPLEEQQI (222 aa)) is mediates localization to the chromosome and the spindle and negatively regulates chromosome alignment. Lys606 is covalently cross-linked (Glycyl lysine isopeptide (Lys-Gly) (interchain with G-Cter in SUMO2)). Phosphoserine is present on residues Ser615, Ser626, Ser627, and Ser632. Lys638 is covalently cross-linked (Glycyl lysine isopeptide (Lys-Gly) (interchain with G-Cter in SUMO2)). 3 positions are modified to phosphoserine: Ser651, Ser652, and Ser653. Residue Lys670 forms a Glycyl lysine isopeptide (Lys-Gly) (interchain with G-Cter in SUMO2) linkage. Position 675 is a phosphoserine (Ser675). A Glycyl lysine isopeptide (Lys-Gly) (interchain with G-Cter in SUMO2) cross-link involves residue Lys689. Residue Ser736 is modified to Phosphoserine. The C2H2-type zinc-finger motif lies at 738-760 (YKCTICGKAFLLESLLKNHVAAH).

As to quaternary structure, interacts with MAD2L2. Interacts with POGZ, CBX1, CBX3 and CBX5. Post-translationally, phosphorylated by CDK1. Mitotic phosphorylation is required for the attachment of spindle microtubules to the kinetochore.

The protein localises to the nucleus. The protein resides in the chromosome. It localises to the centromere. It is found in the kinetochore. Its subcellular location is the cytoplasm. The protein localises to the cytoskeleton. The protein resides in the spindle. Its function is as follows. Required for proper alignment of chromosomes at metaphase and their accurate segregation during mitosis. Involved in the maintenance of spindle microtubules attachment to the kinetochore during sister chromatid biorientation. May recruit CENPE and CENPF to the kinetochore. This Homo sapiens (Human) protein is Chromosome alignment-maintaining phosphoprotein 1 (CHAMP1).